Consider the following 594-residue polypeptide: Protein FAM200C (594 aa).

The sequence is that of Protein FAM200C (FAM200C) from Bos taurus (Bovine).